Consider the following 272-residue polypeptide: HTH-type transcriptional repressor AllR (272 aa).

A disordered region spans residues Met1–Gly20. The 63-residue stretch at Ala21–Leu83 folds into the HTH iclR-type domain. A DNA-binding region (H-T-H motif) is located at residues Val43 to Lys62. In terms of domain architecture, IclR-ED spans Val98–Leu267. Glyoxylate contacts are provided by residues Ser154–Ala156, Asp207, Cys217, and Ser234–Ser236.

Negative regulator of allantoin and glyoxylate utilization operons. Binds to the gcl promoter and to the allS-allA intergenic region. This is HTH-type transcriptional repressor AllR (allR) from Salmonella typhi.